The chain runs to 160 residues: Ribosomal RNA large subunit methyltransferase H (160 aa).

Positions 76 and 108 each coordinate S-adenosyl-L-methionine.

The protein belongs to the RNA methyltransferase RlmH family. Homodimer.

The protein resides in the cytoplasm. The enzyme catalyses pseudouridine(1915) in 23S rRNA + S-adenosyl-L-methionine = N(3)-methylpseudouridine(1915) in 23S rRNA + S-adenosyl-L-homocysteine + H(+). Specifically methylates the pseudouridine at position 1915 (m3Psi1915) in 23S rRNA. The chain is Ribosomal RNA large subunit methyltransferase H from Rhodopseudomonas palustris (strain TIE-1).